The chain runs to 262 residues: Transmembrane and immunoglobulin domain-containing protein 1 (262 aa).

Positions 1–29 (MAWKSSVIMQMGRFLLLVILFLPREMTSS) are cleaved as a signal peptide. In terms of domain architecture, Ig-like C2-type 1 spans 30–114 (VLTVNGKTEN…LGRDQSVSVS (85 aa)). Topologically, residues 30–220 (VLTVNGKTEN…IVKDKTVGVP (191 aa)) are extracellular. Cysteines 54 and 103 form a disulfide. N-linked (GlcNAc...) asparagine glycans are attached at residues Asn58, Asn83, Asn118, Asn158, and Asn190. The Ig-like C2-type 2 domain occupies 122-207 (PPLLSGNDFQ…KSSLKTESLD (86 aa)). A disulfide bridge links Cys143 with Cys195. A helical membrane pass occupies residues 221–241 (IEPIIAACVVIFLTLCFGLIA). The Cytoplasmic portion of the chain corresponds to 242–262 (RRKKIMKLCMKDKDPHSETAL).

In terms of assembly, homodimer. In terms of processing, N-glycosylated.

It localises to the cell membrane. The protein resides in the cytoplasm. Its function is as follows. May control cell-cell adhesion, cell migration and proliferation, cell morphology, and protects renal epithelial cells from oxidative cell injury to promote cell survival. In Homo sapiens (Human), this protein is Transmembrane and immunoglobulin domain-containing protein 1.